A 150-amino-acid polypeptide reads, in one-letter code: MAEEQAQPQLALERIYVKDMSLEVPGAGVFTKEWNPELDINLSSNAEKLDDDHYQVVLTVSVTAKNAEEAAFIAEVHQAGIFLLKDIPEDQIGQILGAYCPNVLFPYAREVISDIVTRGSFPQLLLAPVNFDQAFAQSQQQAQVDAEGNA.

Belongs to the SecB family. Homotetramer, a dimer of dimers. One homotetramer interacts with 1 SecA dimer.

Its subcellular location is the cytoplasm. Functionally, one of the proteins required for the normal export of preproteins out of the cell cytoplasm. It is a molecular chaperone that binds to a subset of precursor proteins, maintaining them in a translocation-competent state. It also specifically binds to its receptor SecA. This chain is Protein-export protein SecB, found in Psychrobacter cryohalolentis (strain ATCC BAA-1226 / DSM 17306 / VKM B-2378 / K5).